A 303-amino-acid chain; its full sequence is Elongation factor Ts (303 aa).

The tract at residues 80–83 (TDFV) is involved in Mg(2+) ion dislocation from EF-Tu.

The protein belongs to the EF-Ts family.

The protein resides in the cytoplasm. In terms of biological role, associates with the EF-Tu.GDP complex and induces the exchange of GDP to GTP. It remains bound to the aminoacyl-tRNA.EF-Tu.GTP complex up to the GTP hydrolysis stage on the ribosome. The sequence is that of Elongation factor Ts from Clostridium botulinum (strain Eklund 17B / Type B).